Here is a 1196-residue protein sequence, read N- to C-terminus: MESIGSHCCSSPFTFITRNSSSSLPRLVNITHRVNLSHQSHRLRNSNSRLTCTATSSSTIEEQRKKKDGSGTKVRLNVRLDHQVNFGDHVAMFGSAKEIGSWKKKSPLNWSENGWVCELELDGGQVLEYKFVIVKNDGSLSWESGDNRVLKVPNSGNFSVVCHWDATRETLDLPQEVGNDDDVGDGGHERDNHDVGDDRVVGSENGAQLQKSTLGGQWQGKDASFMRSNDHGNREVGRNWDTSGLEGTALKMVEGDRNSKNWWRKLEMVREVIVGSVEREERLKALIYSAIYLKWINTGQIPCFEDGGHHRPNRHAEISRLIFRELEHICSKKDATPEEVLVARKIHPCLPSFKAEFTAAVPLTRIRDIAHRNDIPHDLKQEIKHTIQNKLHRNAGPEDLIATEAMLQRITETPGKYSGDFVEQFKIFHNELKDFFNAGSLTEQLDSMKISMDDRGLSALNLFFECKKRLDTSGESSNVLELIKTMHSLASLRETIIKELNSGLRNDAPDTAIAMRQKWRLCEIGLEDYFFVLLSRFLNALETMGGADQLAKDVGSRNVASWNDPLDALVLGVHQVGLSGWKQEECLAIGNELLAWRERDLLEKEGEEDGKTIWAMRLKATLDRARRLTAEYSDLLLQIFPPNVEILGKALGIPENSVKTYTEAEIRAGIIFQISKLCTVLLKAVRNSLGSEGWDVVVPGSTSGTLVQVESIVPGSLPATSGGPIILLVNKADGDEEVSAANGNIAGVMLLQELPHLSHLGVRARQEKIVFVTCDDDDKVADIRRLVGKFVRLEASPSHVNLILSTEGRSRTSKSSATKKTDKNSLSKKKTDKKSLSIDDEESKPGSSSSNSLLYSSKDIPSGGIIALADADVPTSGSKSAACGLLASLAEASSKVHSEHGVPASFKVPTGVVIPFGSMELALKQNNSEEKFASLLEKLETARPEGGELDDICDQIHEVMKTLQVPKETINSISKAFLKDARLIVRSSANVEDLAGMSAAGLYESIPNVSPSDPLVFSDSVCQVWASLYTRRAVLSRRAAGVSQREASMAVLVQEMLSPDLSFVLHTVSPADPDSNLVEAEIAPGLGETLASGTRGTPWRLASGKLDGIVQTLAFANFSEELLVSGTGPADGKYVRLTVDYSKKRLTVDSVFRQQLGQRLGSVGFFLERNFGCAQDVEGCLVGEDVYIVQSRPQPL.

A chloroplast-targeting transit peptide spans 1–54 (MESIGSHCCSSPFTFITRNSSSSLPRLVNITHRVNLSHQSHRLRNSNSRLTCTA). Position 55 is an N-acetylthreonine (T55). In terms of domain architecture, CBM20 spans 66–166 (KKDGSGTKVR…NFSVVCHWDA (101 aa)). The segment at 174-200 (PQEVGNDDDVGDGGHERDNHDVGDDRV) is disordered. Residues 185-200 (DGGHERDNHDVGDDRV) are compositionally biased toward basic and acidic residues. H759 acts as the Tele-phosphohistidine intermediate in catalysis. Residues 804 to 855 (LSTEGRSRTSKSSATKKTDKNSLSKKKTDKKSLSIDDEESKPGSSSSNSLLY) are disordered.

The protein belongs to the PEP-utilizing enzyme family. As to quaternary structure, homodimer. The cofactor is Mg(2+). In terms of tissue distribution, in all starch containing tissues (e.g. roots, leaves, stems, inflorescence and siliques).

It is found in the plastid. It localises to the chloroplast. The enzyme catalyses [(1-&gt;4)-6-phospho-alpha-D-glucosyl](n) + n ATP + n H2O = [(1-&gt;4)-3,6-bisphospho-alpha-D-glucosyl](n) + n AMP + n phosphate + 2n H(+). In terms of biological role, mediates the incorporation of phosphate into starch-like phospho-alpha-glucan, mostly at the C-3 position of glucose units. Required for starch degradation, suggesting that the phosphate content of starch regulates its degradability. In Arabidopsis thaliana (Mouse-ear cress), this protein is Phosphoglucan, water dikinase, chloroplastic (GWD3).